The sequence spans 342 residues: Zinc transporter ZIP11 (342 aa).

Transmembrane regions (helical) follow at residues 12-32, 44-64, 72-92, 194-214, 263-285, 290-307, and 322-342; these read LLGT…VFVF, LGFA…APAV, GFGA…AAFV, IALL…AVGV, FWYG…FAVV, ILPY…YVVM, and LASW…VGLG.

The protein belongs to the ZIP transporter (TC 2.A.5) family.

It localises to the cell membrane. It is found in the nucleus. Its subcellular location is the cytoplasm. The protein resides in the golgi apparatus. The catalysed reaction is Zn(2+)(in) = Zn(2+)(out). It catalyses the reaction Cu(2+)(in) = Cu(2+)(out). Its function is as follows. Zinc importer that regulates cytosolic zinc concentrations either via zinc influx from the extracellular compartment or efflux from intracellular organelles such as Golgi apparatus. May transport copper ions as well. The transport mechanism remains to be elucidated. This is Zinc transporter ZIP11 (SLC39A11) from Homo sapiens (Human).